The following is a 497-amino-acid chain: Glycerol kinase (497 aa).

T21 is an ADP binding site. ATP-binding residues include T21 and T22. T21 is a sn-glycerol 3-phosphate binding site. R25 contacts ADP. Sn-glycerol 3-phosphate is bound by residues R88, E89, Y140, and D244. Glycerol contacts are provided by R88, E89, Y140, D244, and Q245. Residues T266 and G309 each contribute to the ADP site. Residues T266, G309, Q313, and G410 each contribute to the ATP site. Residues G410 and N414 each contribute to the ADP site.

It belongs to the FGGY kinase family.

The catalysed reaction is glycerol + ATP = sn-glycerol 3-phosphate + ADP + H(+). It functions in the pathway polyol metabolism; glycerol degradation via glycerol kinase pathway; sn-glycerol 3-phosphate from glycerol: step 1/1. Its activity is regulated as follows. Inhibited by fructose 1,6-bisphosphate (FBP). In terms of biological role, key enzyme in the regulation of glycerol uptake and metabolism. Catalyzes the phosphorylation of glycerol to yield sn-glycerol 3-phosphate. The polypeptide is Glycerol kinase (Gloeobacter violaceus (strain ATCC 29082 / PCC 7421)).